A 109-amino-acid polypeptide reads, in one-letter code: Class I hydrophobin SC1 (109 aa).

Positions 1-22 (MRFSLAILALPVLAAATAVPRG) are cleaved as a signal peptide. Cystine bridges form between C27-C88, C34-C82, C35-C69, and C89-C102.

The protein belongs to the fungal hydrophobin family. In terms of assembly, self-assembles to form functional amyloid fibrils called rodlets. Self-assembly into fibrillar rodlets occurs spontaneously at hydrophobic:hydrophilic interfaces and the rodlets further associate laterally to form amphipathic monolayers.

It localises to the secreted. It is found in the cell wall. Aerial growth, conidiation, and dispersal of filamentous fungi in the environment rely upon a capability of their secreting small amphipathic proteins called hydrophobins (HPBs) with low sequence identity. Class I can self-assemble into an outermost layer of rodlet bundles on aerial cell surfaces, conferring cellular hydrophobicity that supports fungal growth, development and dispersal; whereas Class II form highly ordered films at water-air interfaces through intermolecular interactions but contribute nothing to the rodlet structure. SC1 is a dikaryon-specific class I hydrophobin that contributes to the formation of aerial hyphae and fruiting bodies. This is Class I hydrophobin SC1 from Schizophyllum commune (Split gill fungus).